The sequence spans 178 residues: Large ribosomal subunit protein uL6 (178 aa).

The protein belongs to the universal ribosomal protein uL6 family. Part of the 50S ribosomal subunit.

This protein binds to the 23S rRNA, and is important in its secondary structure. It is located near the subunit interface in the base of the L7/L12 stalk, and near the tRNA binding site of the peptidyltransferase center. In Kocuria rhizophila (strain ATCC 9341 / DSM 348 / NBRC 103217 / DC2201), this protein is Large ribosomal subunit protein uL6.